The chain runs to 329 residues: T-cell acute lymphocytic leukemia protein 1 homolog (329 aa).

Disordered regions lie at residues 1-28, 40-78, and 91-125; these read MTER…RMAP, ETSR…KGRD, and TELC…SPPA. S12 is subject to Phosphoserine. Residues 58-70 are compositionally biased toward gly residues; the sequence is SGAGGGPASGGGA. Positions 96-106 are enriched in pro residues; that stretch reads PPGPAPAPAPA. Phosphoserine; by MAPK is present on S122. A Phosphoserine modification is found at S172. The bHLH domain occupies 187-239; that stretch reads VRRIFTNSRERWRQQNVNGAFAELRKLIPTHPPDKKLSKNEILRLAMKYINFL. The interval 247–329 is disordered; it reads EEEGTQRAKP…LPAADGAGPR (83 aa). The segment covering 263 to 273 has biased composition (gly residues); it reads GAGGGGAGGGI. The span at 317-329 shows a compositional bias: low complexity; the sequence is PALLPAADGAGPR.

In terms of assembly, efficient DNA binding requires dimerization with another bHLH protein. Forms heterodimers with TCF3. Binds to the LIM domain containing protein LMO2 and to DRG1. Can assemble in a complex with LDB1 and LMO2. Component of a TAL-1 complex composed at least of CBFA2T3, LDB1, TAL1 and TCF3. Interacts with SBNO2; this interaction inhibits TAL1 occupancy of the DCSTAMP promoter, leading to the activation of the DCSTAMP promoter by the transcription factor MITF. Post-translationally, phosphorylated on serine residues. Phosphorylation of Ser-122 by MAPK is strongly stimulated by hypoxia. Ubiquitinated; subsequent to hypoxia-dependent phosphorylation of Ser-122, ubiquitination targets the protein for rapid degradation via the ubiquitin system. This process may be characteristic for microvascular endothelial cells, since it could not be observed in large vessel endothelial cells. In terms of tissue distribution, erythroid and myeloid cells.

The protein resides in the nucleus. Its function is as follows. Implicated in the genesis of hemopoietic malignancies. It may play an important role in hemopoietic differentiation. Serves as a positive regulator of erythroid differentiation. The polypeptide is T-cell acute lymphocytic leukemia protein 1 homolog (Tal1) (Mus musculus (Mouse)).